A 205-amino-acid polypeptide reads, in one-letter code: Holliday junction branch migration complex subunit RuvA (205 aa).

The tract at residues Met1–Thr64 is domain I. Positions Thr65–Glu143 are domain II. The flexible linker stretch occupies residues Val144–Ser152. The tract at residues Ser153–Arg205 is domain III.

It belongs to the RuvA family. As to quaternary structure, homotetramer. Forms an RuvA(8)-RuvB(12)-Holliday junction (HJ) complex. HJ DNA is sandwiched between 2 RuvA tetramers; dsDNA enters through RuvA and exits via RuvB. An RuvB hexamer assembles on each DNA strand where it exits the tetramer. Each RuvB hexamer is contacted by two RuvA subunits (via domain III) on 2 adjacent RuvB subunits; this complex drives branch migration. In the full resolvosome a probable DNA-RuvA(4)-RuvB(12)-RuvC(2) complex forms which resolves the HJ.

It localises to the cytoplasm. In terms of biological role, the RuvA-RuvB-RuvC complex processes Holliday junction (HJ) DNA during genetic recombination and DNA repair, while the RuvA-RuvB complex plays an important role in the rescue of blocked DNA replication forks via replication fork reversal (RFR). RuvA specifically binds to HJ cruciform DNA, conferring on it an open structure. The RuvB hexamer acts as an ATP-dependent pump, pulling dsDNA into and through the RuvAB complex. HJ branch migration allows RuvC to scan DNA until it finds its consensus sequence, where it cleaves and resolves the cruciform DNA. The sequence is that of Holliday junction branch migration complex subunit RuvA from Parvibaculum lavamentivorans (strain DS-1 / DSM 13023 / NCIMB 13966).